The sequence spans 173 residues: uncharacterized protein (173 aa).

Residues 1-23 (ELTSVAGSGRVDSTPLGSRGVTD) form a disordered region.

Component of the acid-insoluble and acid-soluble organic matrix of calcified layers of the shell (at protein level).

It is found in the secreted. This is an uncharacterized protein from Lottia gigantea (Giant owl limpet).